The primary structure comprises 137 residues: Probable disulfide formation protein C (137 aa).

The chain crosses the membrane as a helical span at residues 6–25; that stretch reads ENLMLGSWLTALTAMLGSLY. C35 and C38 are disulfide-bonded. 2 helical membrane passes run 40 to 59 and 66 to 83; these read YQRIIMYPLVLILFIGYLKR and YSLWFSLIGMFTSLYHYS. Residues C97 and C102 are joined by a disulfide bond. Residues 111–133 traverse the membrane as a helical segment; that stretch reads GFVTIPFLAFTAFVIIFICSLLI.

It belongs to the DsbB family. BdbC subfamily.

Its subcellular location is the cell membrane. Required for disulfide bond formation in some proteins. The protein is Probable disulfide formation protein C of Halalkalibacterium halodurans (strain ATCC BAA-125 / DSM 18197 / FERM 7344 / JCM 9153 / C-125) (Bacillus halodurans).